The primary structure comprises 273 residues: Shikimate dehydrogenase (NADP(+)) (273 aa).

Shikimate contacts are provided by residues 15-17 and threonine 62; that span reads SLS. Residue lysine 66 is the Proton acceptor of the active site. Glutamate 78 contributes to the NADP(+) binding site. Residues asparagine 87 and aspartate 102 each contribute to the shikimate site. Residues 126–130, 150–155, and isoleucine 217 contribute to the NADP(+) site; these read GAGGA and NRTIEK. Position 219 (tyrosine 219) interacts with shikimate. Glycine 240 contacts NADP(+).

It belongs to the shikimate dehydrogenase family. As to quaternary structure, homodimer.

The catalysed reaction is shikimate + NADP(+) = 3-dehydroshikimate + NADPH + H(+). The protein operates within metabolic intermediate biosynthesis; chorismate biosynthesis; chorismate from D-erythrose 4-phosphate and phosphoenolpyruvate: step 4/7. Its function is as follows. Involved in the biosynthesis of the chorismate, which leads to the biosynthesis of aromatic amino acids. Catalyzes the reversible NADPH linked reduction of 3-dehydroshikimate (DHSA) to yield shikimate (SA). The protein is Shikimate dehydrogenase (NADP(+)) of Nitrosopumilus maritimus (strain SCM1).